The following is a 355-amino-acid chain: UPF0421 protein BCE_2776 (355 aa).

Transmembrane regions (helical) follow at residues 19 to 39 (IAVF…IFAV), 74 to 94 (FTFF…FTIV), 109 to 129 (TLTA…AFLI), and 131 to 151 (LATT…ILPP).

Belongs to the UPF0421 family.

The protein localises to the cell membrane. The chain is UPF0421 protein BCE_2776 from Bacillus cereus (strain ATCC 10987 / NRS 248).